The following is a 777-amino-acid chain: DNA ligase (777 aa).

Residues 35-39 (DAEYD), 84-85 (SL), and Glu-116 contribute to the NAD(+) site. The N6-AMP-lysine intermediate role is filled by Lys-118. The NAD(+) site is built by Arg-139, Glu-176, Lys-293, and Lys-317. Residues Cys-411, Cys-414, Cys-429, and Cys-435 each coordinate Zn(2+). The BRCT domain occupies 691–777 (MESQPLEGQT…NQHGIDPGAL (87 aa)).

This sequence belongs to the NAD-dependent DNA ligase family. LigA subfamily. It depends on Mg(2+) as a cofactor. Mn(2+) serves as cofactor.

The enzyme catalyses NAD(+) + (deoxyribonucleotide)n-3'-hydroxyl + 5'-phospho-(deoxyribonucleotide)m = (deoxyribonucleotide)n+m + AMP + beta-nicotinamide D-nucleotide.. Its function is as follows. DNA ligase that catalyzes the formation of phosphodiester linkages between 5'-phosphoryl and 3'-hydroxyl groups in double-stranded DNA using NAD as a coenzyme and as the energy source for the reaction. It is essential for DNA replication and repair of damaged DNA. This chain is DNA ligase, found in Alcanivorax borkumensis (strain ATCC 700651 / DSM 11573 / NCIMB 13689 / SK2).